The sequence spans 217 residues: Frataxin, mitochondrial (217 aa).

The transit peptide at 1–42 directs the protein to the mitochondrion; sequence MWTLGRRSVASFLPRSALPGFAPTRAGAPRPAKDLSLSGLPG.

It belongs to the frataxin family. Component of the mitochondrial core iron-sulfur cluster (ISC) complex composed of NFS1, LYRM4, NDUFAB1, ISCU, FXN, and FDX2; this complex is a heterohexamer containing two copies of each monomer. Homodimer. Monomer (probable predominant form). Oligomer. Monomers and polymeric aggregates of &gt;1 MDa have been isolated from mitochondria. A small fraction of heterologous overexpressed recombinant frataxin forms high-molecular weight aggregates that incorporate iron. Interacts with LYRM4. Interacts (via ferrous form) with ISCU; the interaction is possible when both are bound to the dimeric form of the cysteine desulfurase complex (NFS1:LYRM4) and the interaction enhances FXN interaction to the dimeric form of the cysteine desulfurase complex (NFS1:LYRM4). Interacts with FECH; one iron-bound FXN monomer seems to interact with a FECH homodimer. Interacts with SDHA and SDHB. Interacts with ACO2; the interaction is dependent on citrate. Interacts with HSPA9. As to quaternary structure, interacts with ACO1. Interacts with ISCU (cytoplasmic form). Post-translationally, processed in two steps by mitochondrial processing peptidase (MPP). MPP first cleaves the precursor to intermediate form and subsequently converts the intermediate to yield frataxin mature form (frataxin(81-210)) which is the predominant form. The additional forms, frataxin(56-210) and frataxin(78-210), seem to be produced when the normal maturation process is impaired; their physiological relevance is unsure.

The protein localises to the mitochondrion. Its subcellular location is the cytoplasm. It localises to the cytosol. It carries out the reaction 4 Fe(2+) + O2 + 4 H(+) = 4 Fe(3+) + 2 H2O. Functionally, functions as an activator of persulfide transfer to the scaffoding protein ISCU as component of the core iron-sulfur cluster (ISC) assembly complex and participates to the [2Fe-2S] cluster assembly. Accelerates sulfur transfer from NFS1 persulfide intermediate to ISCU and to small thiols such as L-cysteine and glutathione leading to persulfuration of these thiols and ultimately sulfide release. Binds ferrous ion and is released from FXN upon the addition of both L-cysteine and reduced FDX2 during [2Fe-2S] cluster assembly. The core iron-sulfur cluster (ISC) assembly complex is involved in the de novo synthesis of a [2Fe-2S] cluster, the first step of the mitochondrial iron-sulfur protein biogenesis. This process is initiated by the cysteine desulfurase complex (NFS1:LYRM4:NDUFAB1) that produces persulfide which is delivered on the scaffold protein ISCU in a FXN-dependent manner. Then this complex is stabilized by FDX2 which provides reducing equivalents to accomplish the [2Fe-2S] cluster assembly. Finally, the [2Fe-2S] cluster is transferred from ISCU to chaperone proteins, including HSCB, HSPA9 and GLRX5. May play a role in the protection against iron-catalyzed oxidative stress through its ability to catalyze the oxidation of Fe(2+) to Fe(3+); the oligomeric form but not the monomeric form has in vitro ferroxidase activity. May be able to store large amounts of iron in the form of a ferrihydrite mineral by oligomerization; however, the physiological relevance is unsure as reports are conflicting and the function has only been shown using heterologous overexpression systems. May function as an iron chaperone protein that protects the aconitase [4Fe-4S]2+ cluster from disassembly and promotes enzyme reactivation. May play a role as a high affinity iron binding partner for FECH that is capable of both delivering iron to ferrochelatase and mediating the terminal step in mitochondrial heme biosynthesis. Its function is as follows. Modulates the RNA-binding activity of ACO1. May be involved in the cytoplasmic iron-sulfur protein biogenesis. May contribute to oxidative stress resistance and overall cell survival. This Bos taurus (Bovine) protein is Frataxin, mitochondrial.